Here is a 433-residue protein sequence, read N- to C-terminus: Steroid hormone receptor ERR2 (433 aa).

The disordered stretch occupies residues 1–41; the sequence is MSSEDRHLGSSCGSFIKTEPSSPSSGIDALSHHSPSGSSDA. A compositionally biased stretch (low complexity) spans 32 to 41; sequence HHSPSGSSDA. The tract at residues 93-211 is interaction with NANOG; that stretch reads YMLNAIPKRL…SPPAKKPLTK (119 aa). The nuclear receptor DNA-binding region spans 100–186; the sequence is KRLCLVCGDI…RVRGGRQKYK (87 aa). NR C4-type zinc fingers lie at residues 103–123 and 139–163; these read CLVCGDIASGYHYGVASCEAC and CPATNECEITKRRRKSCQACRFMKC. The interval 203-433 is essential for ESRRB transcriptional activity and interaction with NCOA3; the sequence is PPAKKPLTKI…LFLEMLEAKV (231 aa). The NR LBD domain occupies 208-432; sequence PLTKIVSYLL…KLFLEMLEAK (225 aa).

This sequence belongs to the nuclear hormone receptor family. NR3 subfamily. In terms of assembly, binds DNA as a monomer. Interacts with NR0B1; represses ESRRB activity at the GATA6 promoter. Interacts with NANOG; reciprocally modulates their transcriptional activities and activates POU5F1 expression. Interacts with NCOA3; mediates the interaction between ESRRB and RNA polymerase II complexes and allows NCOA3 corecruitment to ESRRB, KLF4, NANOG, and SOX2 enhancer regions to trigger ESRRB-dependent gene activation involved in self-renewal and pluripotency. Interacts with KDM1A; co-occupes the core set of ESRRB targets including ELF5 and EOMES. Interacts with the multiprotein complex Integrator, at least composed of INTS1, INTS2, INTS3, INTS4, INTS5, INTS6, INTS7, INTS8, INTS9/RC74, INTS10, INTS11/CPSF3L and INTS12; ESRRB is probably not a core component of the integrator complex and associates to integrator via its interaction with INTS1 and INTS9; attracts the transcriptional machinery. Interacts with JARID2. Interacts with POU5F1; recruits ESRRB near the POU5F1-SOX2 element in the NANOG proximal promoter leading to activation of NANOG expression; the interaction is DNA independent. In terms of processing, acetylated by PCAF/KAT2 (in vitro).

It is found in the nucleus. It localises to the cytoplasm. Its subcellular location is the chromosome. Transcription factor that binds a canonical ESRRB recognition (ERRE) sequence 5'TCAAGGTCA-3' localized on promoter and enhancer of targets genes regulating their expression or their transcription activity. Plays a role, in a LIF independent manner, in maintainance of self-renewal and pluripotency of embryonic and trophoblast stem cells through different signaling pathways including FGF signaling pathway and Wnt signaling pathways. Involved in morula development (2-16 cells embryos) by acting as a regulator at the 8-cell stage. Upon FGF signaling pathway activation, interacts with KDM1A by directly binding to enhancer site of ELF5 and EOMES and activating their transcription leading to self-renewal of trophoblast stem cells. Also regulates expression of multiple rod-specific genes and is required for survival of this cell type. Plays a role as transcription factor activator of GATA6, NR0B1, POU5F1 and PERM1. Plays a role as transcription factor repressor of NFE2L2 transcriptional activity and ESR1 transcriptional activity. During mitosis remains bound to a subset of interphase target genes, including pluripotency regulators, through the canonical ESRRB recognition (ERRE) sequence, leading to their transcriptional activation in early G1 phase. Can coassemble on structured DNA elements with other transcription factors like SOX2, POU5F1, KDM1A and NCOA3 to trigger ESRRB-dependent gene activation. This mechanism, in the case of SOX2 corecruitment prevents the embryonic stem cells (ESCs) to epiblast stem cells (EpiSC) transition through positive regulation of NR0B1 that inhibits the EpiSC transcriptional program. Also plays a role inner ear development by controlling expression of ion channels and transporters and in early placentation. The polypeptide is Steroid hormone receptor ERR2 (Rattus norvegicus (Rat)).